The chain runs to 313 residues: Malate dehydrogenase (313 aa).

Residues 11 to 16 and aspartate 35 contribute to the NAD(+) site; that span reads GAGNIG. Positions 86 and 92 each coordinate substrate. NAD(+) is bound by residues asparagine 99 and 122-124; that span reads ISN. Residues asparagine 124 and arginine 155 each coordinate substrate. Histidine 179 acts as the Proton acceptor in catalysis.

This sequence belongs to the LDH/MDH superfamily. MDH type 3 family.

The enzyme catalyses (S)-malate + NAD(+) = oxaloacetate + NADH + H(+). In terms of biological role, catalyzes the reversible oxidation of malate to oxaloacetate. This Sorangium cellulosum (strain So ce56) (Polyangium cellulosum (strain So ce56)) protein is Malate dehydrogenase.